Here is a 352-residue protein sequence, read N- to C-terminus: C-C chemokine receptor type 5 (352 aa).

At 1 to 30 the chain is on the extracellular side; that stretch reads MDYQVSSPTYDIDYYTSEPCQKVNVKQIAA. Tyr3 bears the Sulfotyrosine mark. Ser6 and Ser7 each carry an O-linked (GalNAc...) serine glycan. 3 positions are modified to sulfotyrosine: Tyr10, Tyr14, and Tyr15. Intrachain disulfides connect Cys20–Cys269 and Cys101–Cys178. A helical membrane pass occupies residues 31–58; that stretch reads RLLPPLYSLVFIFGFVGNILVVLILINC. Topologically, residues 59–68 are cytoplasmic; sequence KRLKSMTDIY. The helical transmembrane segment at 69 to 89 threads the bilayer; that stretch reads LLNLAISDLFFLLTVPFWAHY. Over 90 to 102 the chain is Extracellular; sequence AAAQWDFGNTMCQ. The helical transmembrane segment at 103–124 threads the bilayer; the sequence is LLTGLYFIGFFSGIFFIILLTI. The Cytoplasmic portion of the chain corresponds to 125–141; it reads DRYLAIVHAVFALKART. The helical transmembrane segment at 142 to 166 threads the bilayer; it reads VTFGVVTSVITWVVAVFASLPGIIF. At 167–198 the chain is on the extracellular side; it reads TRSQREGLHYTCSSHFPYSQYQFWKNFQTLKI. The helical transmembrane segment at 199-218 threads the bilayer; that stretch reads VILGLVLPLLVMVICYSGIL. The Cytoplasmic portion of the chain corresponds to 219 to 235; the sequence is KTLLRCRNEKKRHRAVR. Residues 236-260 traverse the membrane as a helical segment; sequence LIFTIMIVYFLFWAPYNIVLLLNTF. At 261–277 the chain is on the extracellular side; that stretch reads QEFFGLNNCSSSNRLDQ. A helical transmembrane segment spans residues 278–301; the sequence is AMQVTETLGMTHCCINPIIYAFVG. Residues 302–352 are Cytoplasmic-facing; it reads EKFRNYLLVFFQKHIAKRFCKCCSIFQQEAPERASSVYTRSTGEQEISVGL. 3 S-palmitoyl cysteine lipidation sites follow: Cys321, Cys323, and Cys324. A phosphoserine; by BARK1 mark is found at Ser336, Ser337, Ser342, and Ser349.

It belongs to the G-protein coupled receptor 1 family. In terms of assembly, interacts with PRAF2. Efficient ligand binding to CCL3/MIP-1alpha and CCL4/MIP-1beta requires sulfation, O-glycosylation and sialic acid modifications. Glycosylation on Ser-6 is required for efficient binding of CCL4. Interacts with GRK2. Interacts with ARRB1 and ARRB2. Interacts with CNIH4. Interacts with S100A4; this interaction stimulates T-lymphocyte chemotaxis. Sulfated on at least 2 of the N-terminal tyrosines. Sulfation is required for efficient binding of the chemokines, CCL3 and CCL4. Post-translationally, palmitoylation in the C-terminal is important for cell surface expression. In terms of processing, phosphorylation on serine residues in the C-terminal is stimulated by binding CC chemokines especially by APO-RANTES. O-glycosylated, but not N-glycosylated. Ser-6 appears to be the major site even if Ser-7 may be also O-glycosylated. Also sialylated glycans present which contribute to chemokine binding. Thr-16 and Ser-17 may also be glycosylated and, if so, with small moieties such as a T-antigen.

It localises to the cell membrane. In terms of biological role, receptor for a number of inflammatory CC-chemokines including CCL3/MIP-1-alpha, CCL4/MIP-1-beta and RANTES and subsequently transduces a signal by increasing the intracellular calcium ion level. May play a role in the control of granulocytic lineage proliferation or differentiation. Participates in T-lymphocyte migration to the infection site by acting as a chemotactic receptor. The chain is C-C chemokine receptor type 5 (CCR5) from Semnopithecus entellus (Northern plains gray langur).